The sequence spans 232 residues: tRNA1(Val) (adenine(37)-N6)-methyltransferase (232 aa).

Belongs to the methyltransferase superfamily. tRNA (adenine-N(6)-)-methyltransferase family.

The protein resides in the cytoplasm. The enzyme catalyses adenosine(37) in tRNA1(Val) + S-adenosyl-L-methionine = N(6)-methyladenosine(37) in tRNA1(Val) + S-adenosyl-L-homocysteine + H(+). Its function is as follows. Specifically methylates the adenine in position 37 of tRNA(1)(Val) (anticodon cmo5UAC). This Haemophilus influenzae (strain ATCC 51907 / DSM 11121 / KW20 / Rd) protein is tRNA1(Val) (adenine(37)-N6)-methyltransferase.